We begin with the raw amino-acid sequence, 1321 residues long: Multidrug resistance protein pgp-1 (1321 aa).

At 1 to 77 (MLRNGSLRQS…YTTTLEKLLL (77 aa)) the chain is on the cytoplasmic side. The ABC transmembrane type-1 1 domain occupies 77-381 (LFIGTLVAVI…AGPQLAVLGT (305 aa)). Residues 78 to 98 (FIGTLVAVITGAGLPLMSILQ) traverse the membrane as a helical segment. Residues Asn115 and Asn125 are each glycosylated (N-linked (GlcNAc...) asparagine). Residues 144–164 (AMTVGMWAAGQITVTCYLYVA) traverse the membrane as a helical segment. Asn190 carries an N-linked (GlcNAc...) asparagine glycan. 4 helical membrane passes run 213–233 (KIGMAFQYLSQFITGFIVAFT), 240–260 (LVMLAVTPIQALCGFAIAKSM), 321–341 (ISFGAMQASNFISFALAFYIG), and 350–370 (LNFGDMLTTFSSVMMGSMALG). The Cytoplasmic portion of the chain corresponds to 371–753 (LAGPQLAVLG…LYHARPHALS (383 aa)). Residues 416-652 (ITVENVHFTY…QGLYYDLVTA (237 aa)) form the ABC transporter 1 domain. 451–458 (GSSGCGKS) provides a ligand contact to ATP. Transmembrane regions (helical) follow at residues 754 to 774 (LFIGMSTATIGGFIYPTYSVF) and 798 to 818 (LMFLVLAAAQGICSFLMTFFM). The 290-residue stretch at 754–1043 (LFIGMSTATI…ATSYFPEYAK (290 aa)) folds into the ABC transmembrane type-1 2 domain. Asn850 carries an N-linked (GlcNAc...) asparagine glycan. Helical transmembrane passes span 874–894 (FSTVITTLVSMVAGIGLAFFY), 895–915 (GWQMALLIIAILPIVAFGQYL), 978–998 (IQGLSYGCASSVLYLLNTCAY), and 1017–1037 (VLRVMYAITISTSTLGFATSY). Residues 1038–1321 (FPEYAKATFA…LTQKQMTEKK (284 aa)) are Cytoplasmic-facing. Residues 1077–1315 (VIFKNVRFAY…KGAYYKLTQK (239 aa)) enclose the ABC transporter 2 domain. 1112 to 1119 (GPSGCGKS) is a binding site for ATP.

It belongs to the ABC transporter superfamily. ABCB family. Multidrug resistance exporter (TC 3.A.1.201) subfamily. As to expression, intestinal cells.

The protein localises to the membrane. It catalyses the reaction ATP + H2O + xenobioticSide 1 = ADP + phosphate + xenobioticSide 2.. Energy-dependent efflux pump responsible for decreased drug accumulation in multidrug-resistant cells. The protein is Multidrug resistance protein pgp-1 (pgp-1) of Caenorhabditis elegans.